A 157-amino-acid chain; its full sequence is Dihydrofolate reductase type 6 (157 aa).

A DHFR domain is found at 2-156; that stretch reads KISLMAAVSE…IDYTYQIWAK (155 aa).

It belongs to the dihydrofolate reductase family. Homodimer.

It carries out the reaction (6S)-5,6,7,8-tetrahydrofolate + NADP(+) = 7,8-dihydrofolate + NADPH + H(+). The protein operates within cofactor biosynthesis; tetrahydrofolate biosynthesis; 5,6,7,8-tetrahydrofolate from 7,8-dihydrofolate: step 1/1. Key enzyme in folate metabolism. Catalyzes an essential reaction for de novo glycine and purine synthesis, and for DNA precursor synthesis. This chain is Dihydrofolate reductase type 6 (dhfrVI), found in Proteus mirabilis.